The sequence spans 260 residues: Ras-related protein Rab-26 (260 aa).

Residues 1–56 (MSRKKTPKSKGGSEPATSTLPAAAAATNGPRLAHPRTVRPGPEAPPNGPPQSIRPS) form a disordered region. GTP-binding residues include serine 76, glycine 77, valine 78, glycine 79, lysine 80, threonine 81, cysteine 82, serine 99, and threonine 100. A Mg(2+)-binding site is contributed by threonine 81. 2 consecutive short sequence motifs (switch) follow at residues 90–105 (GAFLAGTFISTVGIDF) and 123–140 (DTAGQERFRSVTHAYYRD). Mg(2+) contacts are provided by threonine 100 and aspartate 123. 6 residues coordinate GTP: glycine 126, asparagine 181, lysine 182, aspartate 184, alanine 212, and arginine 213. 2 S-geranylgeranyl cysteine lipidation sites follow: cysteine 257 and cysteine 258.

It belongs to the small GTPase superfamily. Rab family. Interacts with ADRA2B. Interacts with RIMS1. The cofactor is Mg(2+). As to expression, detected in zymogenic cells in the stomach.

It localises to the cytoplasmic vesicle. The protein localises to the secretory vesicle membrane. Its subcellular location is the golgi apparatus membrane. It carries out the reaction GTP + H2O = GDP + phosphate + H(+). Its activity is regulated as follows. Regulated by guanine nucleotide exchange factors (GEFs) which promote the exchange of bound GDP for free GTP. Regulated by GTPase activating proteins (GAPs) which increase the GTP hydrolysis activity. Inhibited by GDP dissociation inhibitors (GDIs). In terms of biological role, the small GTPases Rab are key regulators of intracellular membrane trafficking, from the formation of transport vesicles to their fusion with membranes. Rabs cycle between an inactive GDP-bound form and an active GTP-bound form that is able to recruit to membranes different set of downstream effectors directly responsible for vesicle formation, movement, tethering and fusion. RAB26 mediates transport of ADRA2A and ADRA2B from the Golgi to the cell membrane. Plays a role in the maturation of zymogenic granules and in pepsinogen secretion in the stomach. Plays a role in the secretion of amylase from acinar granules in the parotid gland. The polypeptide is Ras-related protein Rab-26 (Mus musculus (Mouse)).